Reading from the N-terminus, the 506-residue chain is MRFTTSIINEHRRFSSSSRSWVSPICFSEKKKKPSPPPESSISPVETNPKTKFISHESAVSLMKRERDPQGVLDIFNKASQQKGFNHNNATYSVLLDNLVRHKKFLAVDAILHQMKYETCRFQESLFLNLMRHFSRSDLHDKVMEMFNLIQVIARVKPSLNAISTCLNLLIDSGEVNLSRKLLLYAKHNLGLQPNTCIFNILVKHHCKNGDINFAFLVVEEMKRSGISYPNSITYSTLMDCLFAHSRSKEAVELFEDMISKEGISPDPVTFNVMINGFCRAGEVERAKKILDFMKKNGCNPNVYNYSALMNGFCKVGKIQEAKQTFDEVKKTGLKLDTVGYTTLMNCFCRNGETDEAMKLLGEMKASRCRADTLTYNVILRGLSSEGRSEEALQMLDQWGSEGVHLNKGSYRIILNALCCNGELEKAVKFLSVMSERGIWPHHATWNELVVRLCESGYTEIGVRVLIGFLRIGLIPGPKSWGAVVESICKERKLVHVFELLDSLVS.

The disordered stretch occupies residues 28–48 (SEKKKKPSPPPESSISPVETN). PPR repeat units lie at residues 88–122 (NNATYSVLLDNLVRHKKFLAVDAILHQMKYETCRF), 123–158 (QESLFLNLMRHFSRSDLHDKVMEMFNLIQVIARVKP), 159–194 (SLNAISTCLNLLIDSGEVNLSRKLLLYAKHNLGLQP), 195–229 (NTCIFNILVKHHCKNGDINFAFLVVEEMKRSGISY), 231–266 (NSITYSTLMDCLFAHSRSKEAVELFEDMISKEGISP), 267–301 (DPVTFNVMINGFCRAGEVERAKKILDFMKKNGCNP), 302–336 (NVYNYSALMNGFCKVGKIQEAKQTFDEVKKTGLKL), 337–371 (DTVGYTTLMNCFCRNGETDEAMKLLGEMKASRCRA), 372–406 (DTLTYNVILRGLSSEGRSEEALQMLDQWGSEGVHL), 407–441 (NKGSYRIILNALCCNGELEKAVKFLSVMSERGIWP), 442–476 (HHATWNELVVRLCESGYTEIGVRVLIGFLRIGLIP), and 477–506 (GPKSWGAVVESICKERKLVHVFELLDSLVS).

This sequence belongs to the PPR family. P subfamily.

The chain is Pentatricopeptide repeat-containing protein At5g18475 from Arabidopsis thaliana (Mouse-ear cress).